Reading from the N-terminus, the 194-residue chain is Phosphoheptose isomerase (194 aa).

Positions 37-194 (IANSFKQGGK…LIEFEMAKTA (158 aa)) constitute an SIS domain. 52–54 (NGG) serves as a coordination point for substrate. Residues His61 and Glu65 each contribute to the Zn(2+) site. Residues Glu65, 93 to 94 (ND), 119 to 121 (STS), Ser124, and Gln172 contribute to the substrate site. Zn(2+) contacts are provided by Gln172 and His180.

The protein belongs to the SIS family. GmhA subfamily. In terms of assembly, homotetramer. The cofactor is Zn(2+).

The protein localises to the cytoplasm. It catalyses the reaction 2 D-sedoheptulose 7-phosphate = D-glycero-alpha-D-manno-heptose 7-phosphate + D-glycero-beta-D-manno-heptose 7-phosphate. It participates in carbohydrate biosynthesis; D-glycero-D-manno-heptose 7-phosphate biosynthesis; D-glycero-alpha-D-manno-heptose 7-phosphate and D-glycero-beta-D-manno-heptose 7-phosphate from sedoheptulose 7-phosphate: step 1/1. Its pathway is bacterial outer membrane biogenesis; LOS core biosynthesis. Its function is as follows. Catalyzes the isomerization of sedoheptulose 7-phosphate in D-glycero-D-manno-heptose 7-phosphate. In Haemophilus ducreyi (strain 35000HP / ATCC 700724), this protein is Phosphoheptose isomerase.